The sequence spans 340 residues: Chitinase 2 (340 aa).

A signal peptide spans 1-32 (MSTPRAAASLAKKAALVALAVLAAALATAARA). Residues 33–73 (EQCGAQAGGARCPNCLCCSRWGWCGTTSDFCGDGCQSQCSG) form the Chitin-binding type-1 domain. Disulfide bonds link Cys-35–Cys-50, Cys-44–Cys-56, Cys-47–Cys-74, Cys-49–Cys-63, Cys-67–Cys-71, Cys-110–Cys-172, Cys-184–Cys-192, and Cys-291–Cys-323. The active-site Proton donor is Glu-154.

It belongs to the glycosyl hydrolase 19 family. Chitinase class I subfamily. In terms of tissue distribution, expressed in roots, sheaths and meristems.

It carries out the reaction Random endo-hydrolysis of N-acetyl-beta-D-glucosaminide (1-&gt;4)-beta-linkages in chitin and chitodextrins.. Functionally, hydrolyzes chitin and plays a role in defense against fungal pathogens containing chitin. Its overexpression confers enhanced resistance to sheath blight pathogen (R.solani). The sequence is that of Chitinase 2 (Cht2) from Oryza sativa subsp. japonica (Rice).